Reading from the N-terminus, the 605-residue chain is Ubiquitin carboxyl-terminal hydrolase 2 (605 aa).

The segment at 1–200 (MSQLSSTLKR…CPEYLVDYLE (200 aa)) is necessary for interaction with MDM4. 2 disordered regions span residues 71–107 (LLDYDRGRPLLRPDITGGGKRAESQTRGTERPLGSGL) and 237–264 (WETGKGQAPGPSRSSSPGRDGMNSKSAQ). Basic and acidic residues predominate over residues 90–100 (KRAESQTRGTE). The span at 245-255 (PGPSRSSSPGR) shows a compositional bias: low complexity. The USP domain maps to 267 to 599 (AGLRNLGNTC…DAYLLFYELA (333 aa)). Cys276 serves as the catalytic Nucleophile. The necessary for interaction with MDM4 stretch occupies residues 403–503 (YLEREDSRIG…FPKILVLHLK (101 aa)). The Zn(2+) site is built by Cys425, Cys428, Cys476, and Cys479. His557 acts as the Proton acceptor in catalysis.

Belongs to the peptidase C19 family. USP2 subfamily. As to quaternary structure, homooligomer. Found in trimeric complex with MDM2 and MDM4 and USP2. Interacts with CCND1; the interaction is direct and promotes its stabilization by antagonizing ubiquitin-dependent degradation. Interacts (via N-terminus and C-terminus) with MDM2. Interacts with MDM4. Interacts with PER1. Interacts with KCNQ1; counteracts the NEDD4L-specific down-regulation of I(Ks) and restore plasma membrane localization of KCNQ1. Isoform 4: Interacts with NHERF4 and CLTC. In terms of tissue distribution, expressed in mesangial cells of the kidney and in different types of glomerulonephritides (at protein level).

The protein localises to the cytoplasm. It is found in the perinuclear region. The protein resides in the nucleus. It localises to the membrane. The enzyme catalyses Thiol-dependent hydrolysis of ester, thioester, amide, peptide and isopeptide bonds formed by the C-terminal Gly of ubiquitin (a 76-residue protein attached to proteins as an intracellular targeting signal).. Cleavage is inhibited by ubiquitin in a dosage-dependent manner. Cleavage is blocked by ubiquitin aldehyde. Hydrolase that deubiquitinates polyubiquitinated target proteins such as MDM2, MDM4 and CCND1. Isoform 1 and isoform 4 possess both ubiquitin-specific peptidase and isopeptidase activities. Deubiquitinates MDM2 without reversing MDM2-mediated p53/TP53 ubiquitination and thus indirectly promotes p53/TP53 degradation and limits p53 activity. Has no deubiquitinase activity against p53/TP53. Prevents MDM2-mediated degradation of MDM4. Plays a role in the G1/S cell-cycle progression in normal and cancer cells. Regulates the circadian clock by modulating its intrinsic circadian rhythm and its capacity to respond to external cues. Associates with clock proteins and deubiquitinates core clock component PER1 but does not affect its overall stability. Regulates the nucleocytoplasmic shuttling and nuclear retention of PER1 and its repressive role on the clock transcription factors CLOCK and BMAL1. Plays a role in the regulation of myogenic differentiation of embryonic muscle cells. Its function is as follows. Circadian clock output effector that regulates Ca(2+) absorption in the small intestine. Probably functions by regulating protein levels of the membrane scaffold protein NHERF4 in a rhythmic manner, and is therefore likely to control Ca(2+) membrane permeability mediated by the Ca(2+) channel TRPV6 in the intestine. In Homo sapiens (Human), this protein is Ubiquitin carboxyl-terminal hydrolase 2 (USP2).